Here is a 131-residue protein sequence, read N- to C-terminus: Fumarate reductase subunit C (131 aa).

3 helical membrane passes run 30-50 (EGTAVPAVWFSIELIFALFAL), 57-77 (WAGFVDFLQNPVIVIINLITL), and 109-129 (IIKSLWAVTVVATIVILFVAL).

Belongs to the FrdC family. In terms of assembly, part of an enzyme complex containing four subunits: a flavoprotein (FrdA), an iron-sulfur protein (FrdB), and two hydrophobic anchor proteins (FrdC and FrdD).

The protein resides in the cell inner membrane. Its function is as follows. Two distinct, membrane-bound, FAD-containing enzymes are responsible for the catalysis of fumarate and succinate interconversion; fumarate reductase is used in anaerobic growth, and succinate dehydrogenase is used in aerobic growth. Anchors the catalytic components of the fumarate reductase complex to the cell inner membrane, binds quinones. This chain is Fumarate reductase subunit C, found in Shigella flexneri.